A 388-amino-acid chain; its full sequence is Dipeptidase verJ (388 aa).

The Zn(2+) site is built by His29, Asp31, and Glu142. Positions 169, 243, and 300 each coordinate substrate.

It belongs to the metallo-dependent hydrolases superfamily. Peptidase M19 family. The cofactor is Zn(2+).

It catalyses the reaction an L-aminoacyl-L-amino acid + H2O = 2 an L-alpha-amino acid. It participates in mycotoxin biosynthesis. Dipeptidase; part of the gene cluster that mediates the biosynthesis of 11'-deoxyverticillin A, one of the dimeric epipolythiodioxopiperazines (ETPs) from the verticillin family that act as mycotoxins. 11'-deoxyverticillin A is required for normal conidiation. The nonribosomal peptide synthetase verP is speculated to be responsible for condensation of amino acids to form the carbon skeleton of verticillin, whereas the cluster-specific tailoring enzymes are involved in further modifications leading to the production of 11'-deoxyverticillin A. The sequence is that of Dipeptidase verJ from Clonostachys rogersoniana.